Reading from the N-terminus, the 447-residue chain is N-succinylarginine dihydrolase (447 aa).

Residues 19 to 28 (AGLSFGNEAS), N110, and 137 to 138 (HR) each bind substrate. E174 is an active-site residue. R212 provides a ligand contact to substrate. H248 is an active-site residue. Substrate is bound by residues D250 and N359. C365 functions as the Nucleophile in the catalytic mechanism.

It belongs to the succinylarginine dihydrolase family. Homodimer.

The catalysed reaction is N(2)-succinyl-L-arginine + 2 H2O + 2 H(+) = N(2)-succinyl-L-ornithine + 2 NH4(+) + CO2. The protein operates within amino-acid degradation; L-arginine degradation via AST pathway; L-glutamate and succinate from L-arginine: step 2/5. Catalyzes the hydrolysis of N(2)-succinylarginine into N(2)-succinylornithine, ammonia and CO(2). The sequence is that of N-succinylarginine dihydrolase from Salmonella typhimurium (strain LT2 / SGSC1412 / ATCC 700720).